Consider the following 384-residue polypeptide: Mannitol-1-phosphate 5-dehydrogenase (384 aa).

NAD(+) is bound at residue 3 to 14; the sequence is AVHFGAGNIGRG.

This sequence belongs to the mannitol dehydrogenase family.

It carries out the reaction D-mannitol 1-phosphate + NAD(+) = beta-D-fructose 6-phosphate + NADH + H(+). The sequence is that of Mannitol-1-phosphate 5-dehydrogenase from Arthrobacter sp. (strain FB24).